A 289-amino-acid polypeptide reads, in one-letter code: Secretory carrier-associated membrane protein (289 aa).

The disordered stretch occupies residues 1–65 (MAGRYDPNPF…TSTDGKKKER (65 aa)). Residues 1–123 (MAGRYDPNPF…EIPIHLRTLQ (123 aa)) are Cytoplasmic-facing. Residues 16-31 (NPFSNPRSAASATNSR) show a composition bias toward polar residues. The stretch at 59–98 (DGKKKERDLQAKEAELRKREQEVRRKEEAIARAGIVIEEK) forms a coiled coil. Helical transmembrane passes span 124–144 (YVAF…VVSV), 156–176 (IWFL…ALWY), 191–211 (FGWF…AAVA), and 239–259 (IFYF…IWVI). Over 260-289 (QQVYMHFRGGGKTAEMKREAALGAMGAALR) the chain is Cytoplasmic.

Belongs to the SCAMP family.

The protein localises to the cell membrane. The protein resides in the cytoplasmic vesicle. Its subcellular location is the secretory vesicle membrane. Its function is as follows. Probably involved in membrane trafficking. This Pisum sativum (Garden pea) protein is Secretory carrier-associated membrane protein (PSAM2).